The primary structure comprises 368 residues: D-alanine--D-alanine ligase (368 aa).

The ATP-grasp domain maps to 151–358 (KKLLAAEGLP…YGTLVSTLVD (208 aa)). An ATP-binding site is contributed by 179–234 (KSRLHLPVFVKPARGGSSIGITRVAEWAALDDAIAHARLHDPKVIVESGIIGREVE). Mg(2+)-binding residues include D313, E325, and N327.

It belongs to the D-alanine--D-alanine ligase family. It depends on Mg(2+) as a cofactor. The cofactor is Mn(2+).

The protein localises to the cytoplasm. The enzyme catalyses 2 D-alanine + ATP = D-alanyl-D-alanine + ADP + phosphate + H(+). The protein operates within cell wall biogenesis; peptidoglycan biosynthesis. In terms of biological role, cell wall formation. The protein is D-alanine--D-alanine ligase of Rhodococcus jostii (strain RHA1).